The following is a 350-amino-acid chain: Histidinol-phosphate aminotransferase (350 aa).

At K212 the chain carries N6-(pyridoxal phosphate)lysine.

The protein belongs to the class-II pyridoxal-phosphate-dependent aminotransferase family. Histidinol-phosphate aminotransferase subfamily. In terms of assembly, homodimer. Requires pyridoxal 5'-phosphate as cofactor.

The enzyme catalyses L-histidinol phosphate + 2-oxoglutarate = 3-(imidazol-4-yl)-2-oxopropyl phosphate + L-glutamate. The protein operates within amino-acid biosynthesis; L-histidine biosynthesis; L-histidine from 5-phospho-alpha-D-ribose 1-diphosphate: step 7/9. This is Histidinol-phosphate aminotransferase from Geobacter sulfurreducens (strain ATCC 51573 / DSM 12127 / PCA).